Reading from the N-terminus, the 805-residue chain is Chloride channel protein (805 aa).

Over 1–48 the chain is Cytoplasmic; sequence MSHEKNEASGYPEAQSWKSQEAMLGARTEVSRWRAVKNCLYRHLVKVL. The next 2 helical transmembrane spans lie at 49-86 and 93-116; these read GEDWIFLLLLGALMALVSWAMDFIGSRGLRFYKYLFAL and LQYLVWVCYPLALILFSSLFCQIV. Positions 122 to 126 match the Selectivity filter part_1 motif; the sequence is GSGIP. Ser-123 contacts chloride. An intramembrane region (helical) is located at residues 125 to 132; sequence IPELKTII. A run of 2 helical transmembrane segments spans residues 141 to 159 and 166 to 184; these read LTLRTFVAKTVGLTVALSA and EGPFVHIASICATLLNQLL. The Selectivity filter part_2 motif lies at 164-168; it reads GKEGP. 2 consecutive intramembrane regions (helical) follow at residues 201–213 and 217–225; these read ILTVGCALGISCC and PLAGVLFSI. The next 3 helical transmembrane spans lie at 237–256, 283–311, and 320–339; these read YWRGFLGGAFSAFIFRVLSV, MPAFAIIGIASGFFGALFVYLNRQIIVFM, and ILKKQRLIYPAVVTFVLATL. An N-linked (GlcNAc...) asparagine glycan is attached at Asn-365. 2 consecutive transmembrane segments (helical) span residues 388–408 and 416–439; these read LNIFIVMALYFVMHFWMAALA and GAFVPVFNLGAVLGRFVGELMALL. The Selectivity filter part_3 motif lies at 416–420; it reads GAFVP. A chloride-binding site is contributed by Phe-418. An intramembrane region (helical) is located at residues 456-470; the sequence is GEYAVIGAAAMTGAV. The note=Loop between two helices intramembrane region spans 471–472; sequence TH. The helical intramembrane region spans 473–484; the sequence is AVSTAVICFELT. Positions 485–489 form an intramembrane region, note=Loop between two helices; it reads GQISH. Residues 490-507 traverse the membrane as a helical segment; sequence VLPMMVAVILANMVAQGL. At 508-805 the chain is on the cytoplasmic side; that stretch reads QPSLYDSIIQ…RTATSNSSGK (298 aa). A chloride-binding site is contributed by Tyr-512. A CBS 1 domain is found at 543–601; sequence MVRDVTSIASTSTYGDLLHVLRQTKLKFFPFVDTPDTNTLLGSIDRTEVEGLLQRRISA. Disordered stretches follow at residues 606-625 and 653-684; these read PAAAAEADEEGRNGETGASF and KVQTEDPRPPSPVPAEEPTQTSGIYQKKQKGT. The 58-residue stretch at 719 to 776 folds into the CBS 2 domain; the sequence is IDQSPFQLVEGTSLQKTHTLFSLLGLDRAYVTSMGKLVGVVALAEIQAAIEGSYQKGF.

It belongs to the chloride channel (TC 2.A.49) family. ClC-0 subfamily. In terms of assembly, homodimer. Each subunit contains a channel ('Double barreled channel').

It is found in the membrane. Voltage-gated chloride channel. This channel is thought to ensure the high conductance of the non-innervated membrane of the electrocyte necessary for efficient current generation caused by sodium influx through the acetylcholine receptor at the innervated membrane. The sequence is that of Chloride channel protein from Torpedo marmorata (Marbled electric ray).